A 592-amino-acid chain; its full sequence is Aspartate--tRNA(Asp/Asn) ligase (592 aa).

Glu175 provides a ligand contact to L-aspartate. Residues Gln199–Lys202 are aspartate. Arg221 provides a ligand contact to L-aspartate. Residues Arg221–Glu223 and Gln230 contribute to the ATP site. An L-aspartate-binding site is contributed by His447. An ATP-binding site is contributed by Glu481. Arg488 serves as a coordination point for L-aspartate. Gly533–Arg536 is an ATP binding site.

Belongs to the class-II aminoacyl-tRNA synthetase family. Type 1 subfamily. As to quaternary structure, homodimer.

It localises to the cytoplasm. The enzyme catalyses tRNA(Asx) + L-aspartate + ATP = L-aspartyl-tRNA(Asx) + AMP + diphosphate. Its function is as follows. Aspartyl-tRNA synthetase with relaxed tRNA specificity since it is able to aspartylate not only its cognate tRNA(Asp) but also tRNA(Asn). Reaction proceeds in two steps: L-aspartate is first activated by ATP to form Asp-AMP and then transferred to the acceptor end of tRNA(Asp/Asn). The sequence is that of Aspartate--tRNA(Asp/Asn) ligase from Dictyoglomus turgidum (strain DSM 6724 / Z-1310).